The primary structure comprises 445 residues: Neuropeptide Y receptor type 5 (445 aa).

Residues 1–42 (MEFKLEEHFNKTFVTENNTAAARNAAFPAWEDYRGSVDDLQY) lie on the Extracellular side of the membrane. N-linked (GlcNAc...) asparagine glycans are attached at residues asparagine 10 and asparagine 17. The helical transmembrane segment at 43–63 (FLIGLYTFVSLLGFMGNLLIL) threads the bilayer. Residues 64–77 (MAVMKKRNQKTTVN) are Cytoplasmic-facing. The chain crosses the membrane as a helical span at residues 78-98 (FLIGNLAFSDILVVLFCSPFT). Over 99–117 (LTSVLLDQWMFGKAMCHIM) the chain is Extracellular. Cysteine 114 and cysteine 198 are oxidised to a cystine. The chain crosses the membrane as a helical span at residues 118–138 (PFLQCVSVLVSTLILISIAIV). Over 139 to 156 (RYHMIKHPISNNLTANHG) the chain is Cytoplasmic. The helical transmembrane segment at 157 to 177 (YFLIATVWTLGFAICSPLPVF) threads the bilayer. Over 178 to 208 (HSLVELKETFGSALLSSKYLCVESWPSDSYR) the chain is Extracellular. The chain crosses the membrane as a helical span at residues 209–229 (IAFTISLLLVQYILPLVCLTV). At 230–368 (SHTSVCRSIS…KKRSRSVFYR (139 aa)) the chain is on the cytoplasmic side. A helical transmembrane segment spans residues 369-389 (LTILILVFAVSWMPLHVFHVV). Residues 390–406 (TDFNDNLISNRHFKLVY) lie on the Extracellular side of the membrane. The helical transmembrane segment at 407–427 (CICHLLGMMSCCLNPILYGFL) threads the bilayer. The Cytoplasmic portion of the chain corresponds to 428–445 (NNGIKADLRALIHCLHMS). Cysteine 441 carries S-palmitoyl cysteine lipidation.

It belongs to the G-protein coupled receptor 1 family. Brain; hypothalamus.

Its subcellular location is the cell membrane. Functionally, receptor for neuropeptide Y and peptide YY. The activity of this receptor is mediated by G proteins that inhibit adenylate cyclase activity. Seems to be associated with food intake. Could be involved in feeding disorders. In Rattus norvegicus (Rat), this protein is Neuropeptide Y receptor type 5 (Npy5r).